The following is a 375-amino-acid chain: Tyrosine--tRNA ligase (375 aa).

5 residues coordinate L-tyrosine: Y37, Y168, Q172, D175, and Q190. The 'KMSKS' region signature appears at 251 to 255 (KMSKS). Position 254 (K254) interacts with ATP.

This sequence belongs to the class-I aminoacyl-tRNA synthetase family. TyrS type 4 subfamily. In terms of assembly, homodimer.

The protein localises to the cytoplasm. It catalyses the reaction tRNA(Tyr) + L-tyrosine + ATP = L-tyrosyl-tRNA(Tyr) + AMP + diphosphate + H(+). Functionally, catalyzes the attachment of tyrosine to tRNA(Tyr) in a two-step reaction: tyrosine is first activated by ATP to form Tyr-AMP and then transferred to the acceptor end of tRNA(Tyr). The polypeptide is Tyrosine--tRNA ligase (Thermococcus gammatolerans (strain DSM 15229 / JCM 11827 / EJ3)).